A 73-amino-acid chain; its full sequence is Large ribosomal subunit protein bL31 (73 aa).

Positions 16, 18, 37, and 40 each coordinate Zn(2+).

Belongs to the bacterial ribosomal protein bL31 family. Type A subfamily. In terms of assembly, part of the 50S ribosomal subunit. Zn(2+) serves as cofactor.

In terms of biological role, binds the 23S rRNA. In Pseudomonas syringae pv. syringae (strain B728a), this protein is Large ribosomal subunit protein bL31.